The chain runs to 71 residues: Protein SlyX homolog (71 aa).

Belongs to the SlyX family.

This Stutzerimonas stutzeri (strain A1501) (Pseudomonas stutzeri) protein is Protein SlyX homolog.